A 458-amino-acid chain; its full sequence is MTRDVSQLFGTDGVRGRANFEPMTVETSVLLGKAIAGVLLEKHAGKHRVVVGKDTRLSGYMFENALIAGLTSMGIETLMLGPIPTPGVAFITRAYRADAGIMISASHNPYRDNGIKIFSSDGFKIGQAVEERIEAMVASKDFGKLPDDHAVGKNKRVKDATGRYIEYAKATFPKGRTLKGLRIVLDCAHGATYRVAPSVFEELDAEVICYGCEPSGCNINAGCGALWPSTIQKAVIEHKADVGIALDGDGDRLIMVDEKGHIVDGDMLLSICASDLKRRQALPDNRVVATVMTNFGVLRYLESLGIQVTISPVGDRHVLQHMLENQAVLGGEQSGHMIFLDYNTTGDGIVSALQVLRIMIESESTLSDLTACIVKSPQALINVPVTKKVPLESLANVQGVLKEVKEVLGDSGRILLRYSGTENICRVMVEGTKKHQVDSLAKTIVDVVEAEIGAGISE.

Residue Ser-106 is the Phosphoserine intermediate of the active site. 4 residues coordinate Mg(2+): Ser-106, Asp-247, Asp-249, and Asp-251. Residue Ser-106 is modified to Phosphoserine.

It belongs to the phosphohexose mutase family. It depends on Mg(2+) as a cofactor. Post-translationally, activated by phosphorylation.

The catalysed reaction is alpha-D-glucosamine 1-phosphate = D-glucosamine 6-phosphate. Its function is as follows. Catalyzes the conversion of glucosamine-6-phosphate to glucosamine-1-phosphate. The chain is Phosphoglucosamine mutase from Chlamydia trachomatis serovar L2 (strain ATCC VR-902B / DSM 19102 / 434/Bu).